Consider the following 510-residue polypeptide: Inner membrane protein YeeR (510 aa).

Residue M1 is a topological domain, cytoplasmic. A helical transmembrane segment spans residues 2 to 22 (LQIVGALILLIAGFAILRLLF). Topologically, residues 23–30 (RALISTAS) are periplasmic. A helical membrane pass occupies residues 31–51 (ALAGLILLCLFGPALLAGYIT). The Cytoplasmic segment spans residues 52–61 (ERITRLFHIR). The helical transmembrane segment at 62–82 (WLAGVFLTIAGMIISFMWGLD) threads the bilayer. Over 83–94 (GKHIALEAHTFD) the chain is Periplasmic. A helical transmembrane segment spans residues 95-115 (SVKFILTTALAGGLLAVPLQI). The Cytoplasmic portion of the chain corresponds to 116-136 (KNIQQNGITPEDISKEINGYY). A helical membrane pass occupies residues 137–157 (CCFYTAFFLMACSACAPLIAL). At 158-164 (QYDISPS) the chain is on the periplasmic side. Residues 165 to 185 (LMWWGGLLYWLAALVTLLWAA) traverse the membrane as a helical segment. Topologically, residues 186–510 (SQIQALKKLT…KIREGKVEER (325 aa)) are cytoplasmic.

The protein resides in the cell inner membrane. The protein is Inner membrane protein YeeR (yeeR) of Escherichia coli (strain K12).